Reading from the N-terminus, the 521-residue chain is Ribonuclease Y (521 aa).

A helical membrane pass occupies residues 3 to 23 (VSIWMLVITVLAAVAAYFAGS). In terms of domain architecture, KH spans 211-271 (TVSVVPLPSD…VRREVARMSL (61 aa)). Positions 337–430 (IYQHSLEVAF…VQAADALSGA (94 aa)) constitute an HD domain.

Belongs to the RNase Y family.

Its subcellular location is the cell membrane. In terms of biological role, endoribonuclease that initiates mRNA decay. The sequence is that of Ribonuclease Y from Pelobacter propionicus (strain DSM 2379 / NBRC 103807 / OttBd1).